We begin with the raw amino-acid sequence, 378 residues long: Queuine tRNA-ribosyltransferase (378 aa).

Asp-89 acts as the Proton acceptor in catalysis. Residues 89–93 (DSGGF), Asp-143, Gln-187, and Gly-214 contribute to the substrate site. An RNA binding region spans residues 245 to 251 (GVGKPQD). The active-site Nucleophile is Asp-264. Positions 269–273 (TRNAR) are RNA binding; important for wobble base 34 recognition. Zn(2+) contacts are provided by Cys-302, Cys-304, Cys-307, and His-334.

This sequence belongs to the queuine tRNA-ribosyltransferase family. In terms of assembly, homodimer. Within each dimer, one monomer is responsible for RNA recognition and catalysis, while the other monomer binds to the replacement base PreQ1. Zn(2+) serves as cofactor.

The catalysed reaction is 7-aminomethyl-7-carbaguanine + guanosine(34) in tRNA = 7-aminomethyl-7-carbaguanosine(34) in tRNA + guanine. It functions in the pathway tRNA modification; tRNA-queuosine biosynthesis. In terms of biological role, catalyzes the base-exchange of a guanine (G) residue with the queuine precursor 7-aminomethyl-7-deazaguanine (PreQ1) at position 34 (anticodon wobble position) in tRNAs with GU(N) anticodons (tRNA-Asp, -Asn, -His and -Tyr). Catalysis occurs through a double-displacement mechanism. The nucleophile active site attacks the C1' of nucleotide 34 to detach the guanine base from the RNA, forming a covalent enzyme-RNA intermediate. The proton acceptor active site deprotonates the incoming PreQ1, allowing a nucleophilic attack on the C1' of the ribose to form the product. After dissociation, two additional enzymatic reactions on the tRNA convert PreQ1 to queuine (Q), resulting in the hypermodified nucleoside queuosine (7-(((4,5-cis-dihydroxy-2-cyclopenten-1-yl)amino)methyl)-7-deazaguanosine). This Blochmanniella floridana protein is Queuine tRNA-ribosyltransferase.